Reading from the N-terminus, the 301-residue chain is Homoserine O-acetyltransferase (301 aa).

C142 acts as the Acyl-thioester intermediate in catalysis. Residues K163 and S192 each coordinate substrate. H235 acts as the Proton acceptor in catalysis. Residue E237 is part of the active site. R249 provides a ligand contact to substrate.

Belongs to the MetA family.

It is found in the cytoplasm. The catalysed reaction is L-homoserine + acetyl-CoA = O-acetyl-L-homoserine + CoA. It participates in amino-acid biosynthesis; L-methionine biosynthesis via de novo pathway; O-acetyl-L-homoserine from L-homoserine: step 1/1. In terms of biological role, transfers an acetyl group from acetyl-CoA to L-homoserine, forming acetyl-L-homoserine. This is Homoserine O-acetyltransferase from Bacillus anthracis (strain A0248).